The sequence spans 81 residues: MNRLTFYGLCLSGAVGMGLLVGSPICRPVFGELLGANRDQEKREKEIKILMAGGTIDPHHNHHDDHHDSHGHGHGKIKGHH.

The N-terminal stretch at 1 to 16 is a signal peptide; sequence MNRLTFYGLCLSGAVG. Positions 55–81 are disordered; the sequence is TIDPHHNHHDDHHDSHGHGHGKIKGHH. Over residues 57 to 71 the composition is skewed to basic and acidic residues; sequence DPHHNHHDDHHDSHG. Basic residues predominate over residues 72–81; that stretch reads HGHGKIKGHH.

The protein localises to the secreted. This is an uncharacterized protein from Dictyostelium discoideum (Social amoeba).